The sequence spans 92 residues: Putative regulatory protein CTN_0877 (92 aa).

It belongs to the RemA family.

The protein is Putative regulatory protein CTN_0877 of Thermotoga neapolitana (strain ATCC 49049 / DSM 4359 / NBRC 107923 / NS-E).